A 146-amino-acid chain; its full sequence is Snaclec coagulation factor IX/factor X-binding protein subunit B2 (146 aa).

A signal peptide spans 1-23 (MGRLIFVSFGLLVVFLSLSGTAA). 3 disulfides stabilise this stretch: cysteine 25-cysteine 36, cysteine 53-cysteine 142, and cysteine 119-cysteine 134. The 112-residue stretch at 32-143 (YEGHCYKPFN…CRMMANFVCE (112 aa)) folds into the C-type lectin domain.

This sequence belongs to the snaclec family. As to quaternary structure, heterodimer of subunits A and B2; disulfide-linked. In terms of tissue distribution, expressed by the venom gland.

The protein localises to the secreted. Anticoagulant protein which binds to the gamma-carboxyglutamic acid-domain regions of factors IX (F9) and factor X (F10) in the presence of calcium with a 1 to 1 stoichiometry. This is Snaclec coagulation factor IX/factor X-binding protein subunit B2 from Trimeresurus stejnegeri (Chinese green tree viper).